Reading from the N-terminus, the 507-residue chain is Histidine ammonia-lyase (507 aa).

Residues 141–143 constitute a cross-link (5-imidazolinone (Ala-Gly)); the sequence is ASG. S142 carries the 2,3-didehydroalanine (Ser) modification.

The protein belongs to the PAL/histidase family. Contains an active site 4-methylidene-imidazol-5-one (MIO), which is formed autocatalytically by cyclization and dehydration of residues Ala-Ser-Gly.

The protein resides in the cytoplasm. The catalysed reaction is L-histidine = trans-urocanate + NH4(+). It functions in the pathway amino-acid degradation; L-histidine degradation into L-glutamate; N-formimidoyl-L-glutamate from L-histidine: step 1/3. This is Histidine ammonia-lyase from Burkholderia cenocepacia (strain HI2424).